A 428-amino-acid chain; its full sequence is Adenylosuccinate synthetase (428 aa).

Residues 12 to 18 and 40 to 42 each bind GTP; these read GDEGKGK and GHT. Asp13 (proton acceptor) is an active-site residue. Positions 13 and 40 each coordinate Mg(2+). Residues 13-16, 38-41, Thr127, Arg141, Gln222, Thr237, and Arg301 contribute to the IMP site; these read DEGK and NAGH. The Proton donor role is filled by His41. 297–303 serves as a coordination point for substrate; sequence TVTKRPR. Residues Arg303, 329 to 331, and 411 to 413 contribute to the GTP site; these read CLD and SVG.

The protein belongs to the adenylosuccinate synthetase family. Homodimer. Requires Mg(2+) as cofactor.

It localises to the cytoplasm. It catalyses the reaction IMP + L-aspartate + GTP = N(6)-(1,2-dicarboxyethyl)-AMP + GDP + phosphate + 2 H(+). The protein operates within purine metabolism; AMP biosynthesis via de novo pathway; AMP from IMP: step 1/2. Plays an important role in the de novo pathway of purine nucleotide biosynthesis. Catalyzes the first committed step in the biosynthesis of AMP from IMP. In Levilactobacillus brevis (strain ATCC 367 / BCRC 12310 / CIP 105137 / JCM 1170 / LMG 11437 / NCIMB 947 / NCTC 947) (Lactobacillus brevis), this protein is Adenylosuccinate synthetase.